Reading from the N-terminus, the 1416-residue chain is DNA-directed RNA polymerase subunit beta' (1416 aa).

Zn(2+) is bound by residues Cys71, Cys73, Cys86, and Cys89. The Mg(2+) site is built by Asp461, Asp463, and Asp465. Residues Cys815, Cys892, Cys899, and Cys902 each coordinate Zn(2+).

This sequence belongs to the RNA polymerase beta' chain family. As to quaternary structure, the RNAP catalytic core consists of 2 alpha, 1 beta, 1 beta' and 1 omega subunit. When a sigma factor is associated with the core the holoenzyme is formed, which can initiate transcription. Requires Mg(2+) as cofactor. Zn(2+) serves as cofactor.

The catalysed reaction is RNA(n) + a ribonucleoside 5'-triphosphate = RNA(n+1) + diphosphate. In terms of biological role, DNA-dependent RNA polymerase catalyzes the transcription of DNA into RNA using the four ribonucleoside triphosphates as substrates. In Blochmanniella pennsylvanica (strain BPEN), this protein is DNA-directed RNA polymerase subunit beta'.